The chain runs to 308 residues: Ribosomal RNA small subunit methyltransferase H (308 aa).

Residues 31–33 (GGH), aspartate 51, phenylalanine 75, aspartate 97, and glutamine 104 each bind S-adenosyl-L-methionine.

Belongs to the methyltransferase superfamily. RsmH family.

Its subcellular location is the cytoplasm. The catalysed reaction is cytidine(1402) in 16S rRNA + S-adenosyl-L-methionine = N(4)-methylcytidine(1402) in 16S rRNA + S-adenosyl-L-homocysteine + H(+). Specifically methylates the N4 position of cytidine in position 1402 (C1402) of 16S rRNA. This is Ribosomal RNA small subunit methyltransferase H from Tolumonas auensis (strain DSM 9187 / NBRC 110442 / TA 4).